A 605-amino-acid polypeptide reads, in one-letter code: Phosphoenolpyruvate carboxykinase (ATP) (605 aa).

Positions 27 to 48 are enriched in low complexity; sequence SGPSSSFINNNNSNNNNNKSSN. The tract at residues 27-67 is disordered; that stretch reads SGPSSSFINNNNSNNNNNKSSNMFNHDHVNKTNLHPGGVKP. 307 to 314 provides a ligand contact to ATP; that stretch reads GLSGTGKT.

Belongs to the phosphoenolpyruvate carboxykinase (ATP) family.

The enzyme catalyses oxaloacetate + ATP = phosphoenolpyruvate + ADP + CO2. It functions in the pathway carbohydrate biosynthesis; gluconeogenesis. The polypeptide is Phosphoenolpyruvate carboxykinase (ATP) (acu-6) (Neurospora crassa (strain ATCC 24698 / 74-OR23-1A / CBS 708.71 / DSM 1257 / FGSC 987)).